A 1168-amino-acid chain; its full sequence is Transcription-repair-coupling factor (1168 aa).

The 162-residue stretch at 633–794 folds into the Helicase ATP-binding domain; it reads DMQKSRPMDR…MLGVRDLSVI (162 aa). 646-653 serves as a coordination point for ATP; sequence GDVGYGKT. The DEEQ box motif lies at 747–750; that stretch reads DEEQ. In terms of domain architecture, Helicase C-terminal spans 808–969; sequence VLEQNMSFIK…GFKIAMRDLN (162 aa).

It in the N-terminal section; belongs to the UvrB family. This sequence in the C-terminal section; belongs to the helicase family. RecG subfamily.

Its subcellular location is the cytoplasm. Its function is as follows. Couples transcription and DNA repair by recognizing RNA polymerase (RNAP) stalled at DNA lesions. Mediates ATP-dependent release of RNAP and its truncated transcript from the DNA, and recruitment of nucleotide excision repair machinery to the damaged site. The chain is Transcription-repair-coupling factor from Staphylococcus aureus (strain USA300).